The following is a 261-amino-acid chain: UPF0246 protein Reut_A1014 (261 aa).

It belongs to the UPF0246 family.

The protein is UPF0246 protein Reut_A1014 of Cupriavidus pinatubonensis (strain JMP 134 / LMG 1197) (Cupriavidus necator (strain JMP 134)).